Consider the following 455-residue polypeptide: L-serine dehydratase (455 aa).

It belongs to the iron-sulfur dependent L-serine dehydratase family. It depends on [4Fe-4S] cluster as a cofactor.

It catalyses the reaction L-serine = pyruvate + NH4(+). It functions in the pathway carbohydrate biosynthesis; gluconeogenesis. The polypeptide is L-serine dehydratase (sdaA) (Streptomyces coelicolor (strain ATCC BAA-471 / A3(2) / M145)).